Here is a 129-residue protein sequence, read N- to C-terminus: Glycine cleavage system H protein (129 aa).

Positions 24 to 106 (IATIGITEFA…YGEGWFLKVR (83 aa)) constitute a Lipoyl-binding domain. An N6-lipoyllysine modification is found at K65.

This sequence belongs to the GcvH family. The glycine cleavage system is composed of four proteins: P, T, L and H. (R)-lipoate is required as a cofactor.

Its function is as follows. The glycine cleavage system catalyzes the degradation of glycine. The H protein shuttles the methylamine group of glycine from the P protein to the T protein. This chain is Glycine cleavage system H protein, found in Nostoc punctiforme (strain ATCC 29133 / PCC 73102).